Consider the following 305-residue polypeptide: Glycine--tRNA ligase alpha subunit (305 aa).

This sequence belongs to the class-II aminoacyl-tRNA synthetase family. As to quaternary structure, tetramer of two alpha and two beta subunits.

The protein localises to the cytoplasm. The enzyme catalyses tRNA(Gly) + glycine + ATP = glycyl-tRNA(Gly) + AMP + diphosphate. This is Glycine--tRNA ligase alpha subunit from Streptococcus pneumoniae (strain Hungary19A-6).